We begin with the raw amino-acid sequence, 370 residues long: Protein STRICTOSIDINE SYNTHASE-LIKE 4 (370 aa).

The signal sequence occupies residues 1 to 21 (MVLFFSTRFLFFSIFFPCLIS). A glycan (N-linked (GlcNAc...) asparagine) is linked at Asn101. The residue at position 303 (Tyr303) is a Phosphotyrosine.

It belongs to the strictosidine synthase family.

It localises to the vacuole. In Arabidopsis thaliana (Mouse-ear cress), this protein is Protein STRICTOSIDINE SYNTHASE-LIKE 4.